The chain runs to 110 residues: MFGAFRFTNPLSGGLLWKIPWRMSKFQKLRQRRRLRAVDNVVATIENALAKKGETVKAVERWRAEMPTEAEMLPKDKYTIFDRKEKRYRKGIHKLPKWTRVSQRVNPPGY.

It belongs to the mitochondrion-specific ribosomal protein mL60 family. In terms of assembly, component of the mitochondrial large ribosomal subunit (mt-LSU). Mature N.crassa 74S mitochondrial ribosomes consist of a small (37S) and a large (54S) subunit. The 37S small subunit contains a 16S ribosomal RNA (16S mt-rRNA) and 32 different proteins. The 54S large subunit contains a 23S rRNA (23S mt-rRNA) and 42 different proteins.

The protein resides in the mitochondrion. In terms of biological role, component of the mitochondrial ribosome (mitoribosome), a dedicated translation machinery responsible for the synthesis of mitochondrial genome-encoded proteins, including at least some of the essential transmembrane subunits of the mitochondrial respiratory chain. The mitoribosomes are attached to the mitochondrial inner membrane and translation products are cotranslationally integrated into the membrane. This Neurospora crassa (strain ATCC 24698 / 74-OR23-1A / CBS 708.71 / DSM 1257 / FGSC 987) protein is Large ribosomal subunit protein mL60 (mrpl31).